We begin with the raw amino-acid sequence, 365 residues long: Histidinol-phosphate aminotransferase (365 aa).

K223 carries the N6-(pyridoxal phosphate)lysine modification.

This sequence belongs to the class-II pyridoxal-phosphate-dependent aminotransferase family. Histidinol-phosphate aminotransferase subfamily. Homodimer. The cofactor is pyridoxal 5'-phosphate.

The enzyme catalyses L-histidinol phosphate + 2-oxoglutarate = 3-(imidazol-4-yl)-2-oxopropyl phosphate + L-glutamate. It functions in the pathway amino-acid biosynthesis; L-histidine biosynthesis; L-histidine from 5-phospho-alpha-D-ribose 1-diphosphate: step 7/9. This Brucella abortus (strain 2308) protein is Histidinol-phosphate aminotransferase.